The primary structure comprises 499 residues: Lysine--tRNA ligase (499 aa).

Residues E408 and E415 each contribute to the Mg(2+) site.

The protein belongs to the class-II aminoacyl-tRNA synthetase family. In terms of assembly, homodimer. Mg(2+) is required as a cofactor.

The protein localises to the cytoplasm. It catalyses the reaction tRNA(Lys) + L-lysine + ATP = L-lysyl-tRNA(Lys) + AMP + diphosphate. This chain is Lysine--tRNA ligase, found in Bacillus cereus (strain G9842).